Consider the following 247-residue polypeptide: Uridylate kinase (247 aa).

15-18 (KLSG) lines the ATP pocket. Residues 23-28 (GEEGFG) form an involved in allosteric activation by GTP region. UMP is bound at residue glycine 57. Glycine 58 and arginine 62 together coordinate ATP. UMP is bound by residues aspartate 77 and 138 to 145 (TGNPFCTT). Residues threonine 165, tyrosine 171, and aspartate 174 each coordinate ATP.

This sequence belongs to the UMP kinase family. Homohexamer.

It is found in the cytoplasm. It catalyses the reaction UMP + ATP = UDP + ADP. Its pathway is pyrimidine metabolism; CTP biosynthesis via de novo pathway; UDP from UMP (UMPK route): step 1/1. Its activity is regulated as follows. Allosterically activated by GTP. Inhibited by UTP. Functionally, catalyzes the reversible phosphorylation of UMP to UDP. The polypeptide is Uridylate kinase (Shewanella loihica (strain ATCC BAA-1088 / PV-4)).